Consider the following 963-residue polypeptide: Kinesin-1 heavy chain (963 aa).

Alanine 2 carries the N-acetylalanine modification. Residues asparagine 8–isoleucine 325 enclose the Kinesin motor domain. Glycine 85 to threonine 92 is a binding site for ATP. Lysine 213 is covalently cross-linked (Glycyl lysine isopeptide (Lys-Gly) (interchain with G-Cter in SUMO2)). Positions valine 329–arginine 914 form a coiled coil. The segment at serine 908–valine 963 is disordered. The globular stretch occupies residues glycine 915 to valine 963. Phosphoserine is present on serine 933. Arginine 956 carries the post-translational modification Omega-N-methylarginine.

This sequence belongs to the TRAFAC class myosin-kinesin ATPase superfamily. Kinesin family. Kinesin subfamily. As to quaternary structure, oligomer composed of two heavy chains and two light chains. Interacts with GRIP1 and PPP1R42. Interacts with SYBU. Interacts with JAKMIP1. Interacts with PLEKHM2. Interacts with ECPAS. Interacts with ZFYVE27. Found in a complex with OGT, RHOT1, RHOT2 and TRAK1. Interacts with APP (via cytoplasmic domain).

The protein resides in the cytoplasm. It localises to the cytoskeleton. The protein localises to the cytolytic granule membrane. Its subcellular location is the lysosome membrane. Microtubule-dependent motor required for normal distribution of mitochondria and lysosomes. Can induce formation of neurite-like membrane protrusions in non-neuronal cells in a ZFYVE27-dependent manner. Regulates centrosome and nuclear positioning during mitotic entry. During the G2 phase of the cell cycle in a BICD2-dependent manner, antagonizes dynein function and drives the separation of nuclei and centrosomes. Required for anterograde axonal transportation of MAPK8IP3/JIP3 which is essential for MAPK8IP3/JIP3 function in axon elongation. Through binding with PLEKHM2 and ARL8B, directs lysosome movement toward microtubule plus ends. Involved in NK cell-mediated cytotoxicity. Drives the polarization of cytolytic granules and microtubule-organizing centers (MTOCs) toward the immune synapse between effector NK lymphocytes and target cells. This chain is Kinesin-1 heavy chain, found in Homo sapiens (Human).